Consider the following 700-residue polypeptide: UvrABC system protein B (700 aa).

One can recognise a Helicase ATP-binding domain in the interval 26–183 (SGLHRGDRIQ…RALVGIQYLR (158 aa)). 39 to 46 (GVTGSGKT) is an ATP binding site. The Beta-hairpin motif lies at 92–115 (YYDYYQPEAYVPSSDTYIEKDASI). The 167-residue stretch at 430-596 (QVDDLLHEIR…GVTKSVDEVR (167 aa)) folds into the Helicase C-terminal domain. The interval 608–627 (REGEAPAPRRLASESAPRSR) is disordered. The UVR domain occupies 631–666 (ETLVGELEIAMREAAVALDFEAAARLRDQLFEVRTA). Residues 667-700 (LGQAPSEARGNAQAPKRPPGSAPQRRAGGGRRGR) form a disordered region.

This sequence belongs to the UvrB family. In terms of assembly, forms a heterotetramer with UvrA during the search for lesions. Interacts with UvrC in an incision complex.

The protein localises to the cytoplasm. Functionally, the UvrABC repair system catalyzes the recognition and processing of DNA lesions. A damage recognition complex composed of 2 UvrA and 2 UvrB subunits scans DNA for abnormalities. Upon binding of the UvrA(2)B(2) complex to a putative damaged site, the DNA wraps around one UvrB monomer. DNA wrap is dependent on ATP binding by UvrB and probably causes local melting of the DNA helix, facilitating insertion of UvrB beta-hairpin between the DNA strands. Then UvrB probes one DNA strand for the presence of a lesion. If a lesion is found the UvrA subunits dissociate and the UvrB-DNA preincision complex is formed. This complex is subsequently bound by UvrC and the second UvrB is released. If no lesion is found, the DNA wraps around the other UvrB subunit that will check the other stand for damage. The polypeptide is UvrABC system protein B (Gemmatimonas aurantiaca (strain DSM 14586 / JCM 11422 / NBRC 100505 / T-27)).